The primary structure comprises 117 residues: MDKKSARIRRAARARHMMREQGVTRLVIHRTPRHIYAQVIAPNGSEVLAAASTVEKVISEQVKYTGNKDAAAVVGKVVAERALAKGVKDVAFDRSGFKYHGRVQTLADAAREAGLQF.

Belongs to the universal ribosomal protein uL18 family. In terms of assembly, part of the 50S ribosomal subunit; part of the 5S rRNA/L5/L18/L25 subcomplex. Contacts the 5S and 23S rRNAs.

In terms of biological role, this is one of the proteins that bind and probably mediate the attachment of the 5S RNA into the large ribosomal subunit, where it forms part of the central protuberance. This chain is Large ribosomal subunit protein uL18, found in Pasteurella multocida (strain Pm70).